The sequence spans 169 residues: uncharacterized protein (169 aa).

One can recognise an N-acetyltransferase domain in the interval 4-160 (IEVKRLLVNY…EGVKEQLSED (157 aa)).

This is an uncharacterized protein from Halalkalibacterium halodurans (strain ATCC BAA-125 / DSM 18197 / FERM 7344 / JCM 9153 / C-125) (Bacillus halodurans).